The following is a 44-amino-acid chain: Photosystem I reaction center subunit IX 2 (44 aa).

The helical transmembrane segment at 13–35 threads the bilayer; that stretch reads APVLATLWLSSTAVILIGVNSYF.

The protein belongs to the PsaJ family.

The protein localises to the cellular thylakoid membrane. Its function is as follows. May help in the organization of the PsaE and PsaF subunits. This chain is Photosystem I reaction center subunit IX 2 (psaJ2), found in Prochlorococcus marinus (strain NATL2A).